Here is a 759-residue protein sequence, read N- to C-terminus: Spindle pole body component alp16 (759 aa).

As to quaternary structure, interacts with gamma-tubulin.

It is found in the cytoplasm. The protein resides in the cytoskeleton. Its subcellular location is the microtubule organizing center. It localises to the spindle pole body. In terms of biological role, component of the gamma tubule complex that is required for the regulation of both interphase microtubules and mitotic bipolar spindles. This is Spindle pole body component alp16 (alp16) from Schizosaccharomyces pombe (strain 972 / ATCC 24843) (Fission yeast).